We begin with the raw amino-acid sequence, 309 residues long: HPr kinase/phosphorylase (309 aa).

Catalysis depends on residues His138 and Lys159. Position 153 to 160 (153 to 160) interacts with ATP; it reads GQSGVGKS. Ser160 serves as a coordination point for Mg(2+). Asp177 acts as the Proton acceptor; for phosphorylation activity. Proton donor; for dephosphorylation activity in catalysis. Residues 201-210 form an important for the catalytic mechanism of both phosphorylation and dephosphorylation region; the sequence is LEIRGLGIIN. Residue Glu202 participates in Mg(2+) binding. Residue Arg243 is part of the active site. Positions 264-269 are important for the catalytic mechanism of dephosphorylation; the sequence is PVRPGR.

It belongs to the HPrK/P family. As to quaternary structure, homohexamer. Requires Mg(2+) as cofactor.

It carries out the reaction [HPr protein]-L-serine + ATP = [HPr protein]-O-phospho-L-serine + ADP + H(+). The enzyme catalyses [HPr protein]-O-phospho-L-serine + phosphate + H(+) = [HPr protein]-L-serine + diphosphate. Catalyzes the ATP- as well as the pyrophosphate-dependent phosphorylation of a specific serine residue in HPr, a phosphocarrier protein of the phosphoenolpyruvate-dependent sugar phosphotransferase system (PTS). HprK/P also catalyzes the pyrophosphate-producing, inorganic phosphate-dependent dephosphorylation (phosphorolysis) of seryl-phosphorylated HPr (P-Ser-HPr). The two antagonistic activities of HprK/P are regulated by several intracellular metabolites, which change their concentration in response to the absence or presence of rapidly metabolisable carbon sources (glucose, fructose, etc.) in the growth medium. Also phosphorylates/dephosphorylates the HPr-like catabolite repression protein crh on a specific serine residue. Therefore, by controlling the phosphorylation state of HPr and crh, HPrK/P is a sensor enzyme that plays a major role in the regulation of carbon metabolism and sugar transport: it mediates carbon catabolite repression (CCR), and regulates PTS-catalyzed carbohydrate uptake and inducer exclusion. The sequence is that of HPr kinase/phosphorylase from Bacillus mycoides (strain KBAB4) (Bacillus weihenstephanensis).